Here is a 429-residue protein sequence, read N- to C-terminus: Adenylosuccinate synthetase (429 aa).

GTP is bound by residues 12–18 (GDEGKGK) and 40–42 (GHT). The Proton acceptor role is filled by aspartate 13. Aspartate 13 and glycine 40 together coordinate Mg(2+). IMP is bound by residues 13–16 (DEGK), 38–41 (NAGH), threonine 127, arginine 141, glutamine 222, threonine 237, and arginine 301. Catalysis depends on histidine 41, which acts as the Proton donor. 297–303 (ATTGRPR) provides a ligand contact to substrate. GTP contacts are provided by residues arginine 303, 329-331 (KLD), and 411-413 (SLG).

The protein belongs to the adenylosuccinate synthetase family. As to quaternary structure, homodimer. Requires Mg(2+) as cofactor.

The protein resides in the cytoplasm. The catalysed reaction is IMP + L-aspartate + GTP = N(6)-(1,2-dicarboxyethyl)-AMP + GDP + phosphate + 2 H(+). It functions in the pathway purine metabolism; AMP biosynthesis via de novo pathway; AMP from IMP: step 1/2. Functionally, plays an important role in the de novo pathway of purine nucleotide biosynthesis. Catalyzes the first committed step in the biosynthesis of AMP from IMP. The protein is Adenylosuccinate synthetase of Endomicrobium trichonymphae.